We begin with the raw amino-acid sequence, 389 residues long: Na(+)/H(+) antiporter NhaA (389 aa).

A run of 11 helical transmembrane segments spans residues 14-34 (AGGILLLVAVALAMLMANSPL), 59-79 (LILWINDGLMAVFFLLIGLEV), 95-115 (SLPTFAAIGGMLVPAGVYLLF), 124-144 (AGWAIPAATDIAFALGIMALL), 154-174 (VFLLALAIIDDLGVIVIIALF), 177-197 (TDLSTISLVIASLAIAGLVGL), 213-233 (LILWVAVLKSGVHATLAGVII), 257-277 (PWSTFFILPVFAFANAGVYVG), 292-312 (IALGLMLGKPIGVMVFSYIAV), 328-348 (IAPVAAMCGIGFTMSMFIASL), and 363-383 (LGTLIGSIMAALVGYFWLSKV).

This sequence belongs to the NhaA Na(+)/H(+) (TC 2.A.33) antiporter family.

Its subcellular location is the cell inner membrane. It catalyses the reaction Na(+)(in) + 2 H(+)(out) = Na(+)(out) + 2 H(+)(in). Its function is as follows. Na(+)/H(+) antiporter that extrudes sodium in exchange for external protons. The protein is Na(+)/H(+) antiporter NhaA of Shewanella baltica (strain OS155 / ATCC BAA-1091).